Here is a 488-residue protein sequence, read N- to C-terminus: MALLEIAKKSLLAAEKYLALNSLISVQSQPELLSQVQASQERISADSGESKSSIDGQLIAVKDNICTTDFPTTCASKLLEQYVSPFDATVVRKAKEAGAVIMGKTNMDEFGMGSHSMYSHFGPVMQSAEDGRPARSAGGSSGGSAVAVATGMCYAALGTDTGGSVRLPAAYCGIVGFKPSYGMLSRWGVVAYANSLDTLYDAINGHDDNDPTSITPQTRERIQDRLSRSRRRGQRLAIGYPEEFNLVELDDPVRDAWENTLAHLNSQSHRIAPVSLPHTKHALSAYYVLAPAEASSNLAKYDGVRYGYRDPADRSQDGLLFSPTRANFGAEVRRRIIAGAYSLSSEAIDNYFLKAQSARRIIQRDFSNAFAQPNYLITDNLEEGRGKEGVDVLIAPCSLSKAPFLEDVKMQKSALDSYVNDVLTVPASLAGIPAICLPVMHGENDPVGIQVMAQYGDEETMWEVAKIIEEGLGSGVGSKTQPTNPTVN.

Catalysis depends on charge relay system residues lysine 62 and serine 140. Serine 164 acts as the Acyl-ester intermediate in catalysis. The tract at residues 205–228 is disordered; sequence GHDDNDPTSITPQTRERIQDRLSR. The span at 218–227 shows a compositional bias: basic and acidic residues; it reads TRERIQDRLS.

This sequence belongs to the amidase family. GatA subfamily. In terms of assembly, subunit of the heterotrimeric GatCAB amidotransferase (AdT) complex, composed of A, B and C subunits.

The protein localises to the mitochondrion. The enzyme catalyses L-glutamyl-tRNA(Gln) + L-glutamine + ATP + H2O = L-glutaminyl-tRNA(Gln) + L-glutamate + ADP + phosphate + H(+). In terms of biological role, allows the formation of correctly charged Gln-tRNA(Gln) through the transamidation of misacylated Glu-tRNA(Gln) in the mitochondria. The reaction takes place in the presence of glutamine and ATP through an activated gamma-phospho-Glu-tRNA(Gln). The sequence is that of Glutamyl-tRNA(Gln) amidotransferase subunit A, mitochondrial from Tuber melanosporum (strain Mel28) (Perigord black truffle).